A 580-amino-acid polypeptide reads, in one-letter code: Cyclin-K (580 aa).

Residues 262–580 (KQQMPHHTPH…GGLGRAAWMR (319 aa)) form a disordered region. Low complexity-rich tracts occupy residues 263 to 277 (QQMP…QQPP) and 285 to 321 (VPQV…QQPK). Residues Ser-324, Ser-328, Ser-329, and Ser-340 each carry the phosphoserine modification. Low complexity predominate over residues 377–386 (PLAAALGEAE). The span at 400–426 (QIPPPAHPAPVHQPPPLPHRPPPPPPS) shows a compositional bias: pro residues. Low complexity predominate over residues 427 to 444 (SYMTGMSTTSSYMSGEGY). The span at 477-568 (VYPPNPPPPP…PPPIPPPGMP (92 aa)) shows a compositional bias: pro residues.

This sequence belongs to the cyclin family. Cyclin C subfamily. As to quaternary structure, regulatory subunit of cyclin-dependent kinases. Identified in a complex with a kinase and the RNA polymerase II holoenzyme. Interacts with POLR2A. Interacts with CDK12 and CDK13. Interacts with CDK9 according to PubMed:10574912; does not interact with CDK9 according to PubMed:22012619. (Microbial infection) Interacts with human herpes virus 1 (HHV-1) transcriptional regulator ICP22. As to expression, widely expressed. Highest levels in testis.

The protein resides in the nucleus. In terms of biological role, regulatory subunit of cyclin-dependent kinases that mediates activation of target kinases. Plays a role in transcriptional regulation via its role in regulating the phosphorylation of the C-terminal domain (CTD) of the large subunit of RNA polymerase II (POLR2A). The polypeptide is Cyclin-K (CCNK) (Homo sapiens (Human)).